We begin with the raw amino-acid sequence, 630 residues long: PR domain zinc finger protein 5 (630 aa).

Residues 8-124 (DRFSLKSSRV…TDTELLIGYL (117 aa)) form the SET domain. The segment at 167–190 (YACPQCESSFTSEDILAEHLQTLH) adopts a C2H2-type 1 zinc-finger fold. A C2H2-type 2; atypical zinc finger spans residues 199 to 221 (FKCKNCGKKFPVKQALQRHVLQC). A C2H2-type 3; atypical zinc finger spans residues 234 to 256 (FQCSVCNSSFSSASSFEQHQETC). 13 C2H2-type zinc fingers span residues 262-287 (FVCK…ENVH), 295-317 (LICS…RKIH), 320-342 (FDCQ…MITH), 348-370 (YNCE…KVIH), 376-398 (YKCK…KKTH), 404-426 (FQCE…LLIH), 432-455 (FKCH…QVVH), 461-483 (YRCE…KKTH), 489-511 (KICP…IRSH), 517-539 (YQCP…IRTH), 545-567 (YKCS…KRTH), 573-595 (FQCD…KMTH), and 602-625 (AECQ…DNIH).

The protein belongs to the class V-like SAM-binding methyltransferase superfamily. In terms of assembly, interacts with EHMT2/G9A, GFI1 and HDAC1. As to expression, widely expressed with highest levels in colon and ovary. Tends to be silenced in breast, colorectal, gastric and liver cancer tissues.

The protein localises to the nucleus. Its function is as follows. Sequence-specific DNA-binding transcription factor. Represses transcription at least in part by recruitment of the histone methyltransferase EHMT2/G9A and histone deacetylases such as HDAC1. Regulates hematopoiesis-associated protein-coding and microRNA (miRNA) genes. May regulate the expression of proteins involved in extracellular matrix development and maintenance, including fibrillar collagens, such as COL4A1 and COL11A1, connective tissue components, such as HAPLN1, and molecules regulating cell migration and adhesion, including EDIL3 and TGFB2. May cause G2/M arrest and apoptosis in cancer cells. In Homo sapiens (Human), this protein is PR domain zinc finger protein 5 (PRDM5).